A 235-amino-acid chain; its full sequence is Small ribosomal subunit protein uS3 (235 aa).

In terms of domain architecture, KH type-2 spans 39-107; it reads VRKFLNKELA…PAQINIAEVK (69 aa). Residues 215–235 form a disordered region; the sequence is AQSEQQPADKPKKAPRGKGRK.

It belongs to the universal ribosomal protein uS3 family. As to quaternary structure, part of the 30S ribosomal subunit. Forms a tight complex with proteins S10 and S14.

Its function is as follows. Binds the lower part of the 30S subunit head. Binds mRNA in the 70S ribosome, positioning it for translation. This is Small ribosomal subunit protein uS3 from Haemophilus influenzae (strain PittEE).